The sequence spans 148 residues: EKC/KEOPS complex subunit Lage3 (148 aa).

The segment at 1 to 21 is disordered; it reads MQTAHTGLSHTADGADGQTSR.

Belongs to the CTAG/PCC1 family. As to quaternary structure, component of the EKC/KEOPS complex composed of at least GON7, TP53RK, TPRKB, OSGEP and LAGE3; the whole complex dimerizes.

The protein resides in the cytoplasm. The protein localises to the nucleus. Functionally, component of the EKC/KEOPS complex that is required for the formation of a threonylcarbamoyl group on adenosine at position 37 (t(6)A37) in tRNAs that read codons beginning with adenine. The complex is probably involved in the transfer of the threonylcarbamoyl moiety of threonylcarbamoyl-AMP (TC-AMP) to the N6 group of A37. LAGE3 functions as a dimerization module for the complex. This Mus musculus (Mouse) protein is EKC/KEOPS complex subunit Lage3.